Consider the following 388-residue polypeptide: Succinate--CoA ligase [ADP-forming] subunit beta (388 aa).

Residues 9-245 (KELLASYGLP…KSQENERELK (237 aa)) enclose the ATP-grasp domain. ATP-binding positions include Lys-46, 53 to 55 (GRG), Glu-100, Tyr-103, and Glu-108. Residues Asn-200 and Asp-214 each coordinate Mg(2+). Residues Asn-265 and 322 to 324 (GIV) contribute to the substrate site.

The protein belongs to the succinate/malate CoA ligase beta subunit family. Heterotetramer of two alpha and two beta subunits. Mg(2+) serves as cofactor.

The catalysed reaction is succinate + ATP + CoA = succinyl-CoA + ADP + phosphate. It catalyses the reaction GTP + succinate + CoA = succinyl-CoA + GDP + phosphate. The protein operates within carbohydrate metabolism; tricarboxylic acid cycle; succinate from succinyl-CoA (ligase route): step 1/1. Its function is as follows. Succinyl-CoA synthetase functions in the citric acid cycle (TCA), coupling the hydrolysis of succinyl-CoA to the synthesis of either ATP or GTP and thus represents the only step of substrate-level phosphorylation in the TCA. The beta subunit provides nucleotide specificity of the enzyme and binds the substrate succinate, while the binding sites for coenzyme A and phosphate are found in the alpha subunit. The protein is Succinate--CoA ligase [ADP-forming] subunit beta of Neisseria meningitidis serogroup B (strain ATCC BAA-335 / MC58).